We begin with the raw amino-acid sequence, 36 residues long: AKKSVGDLTKADLEGKRVFVRADLNVPLDKEQKXTD.

The (2R)-3-phosphoglycerate site is built by Ala-22, Asp-23, and Asn-25.

Belongs to the phosphoglycerate kinase family. Monomer. The cofactor is Mg(2+).

It is found in the plastid. The protein localises to the chloroplast. It carries out the reaction (2R)-3-phosphoglycerate + ATP = (2R)-3-phospho-glyceroyl phosphate + ADP. Its pathway is carbohydrate biosynthesis; Calvin cycle. This chain is Phosphoglycerate kinase, chloroplastic, found in Scenedesmus fuscus (Green alga).